The chain runs to 221 residues: 7-cyano-7-deazaguanine synthase (221 aa).

10 to 20 (FSGGQDSTTCL) is a binding site for ATP. Residues cysteine 186, cysteine 195, cysteine 198, and cysteine 201 each contribute to the Zn(2+) site.

The protein belongs to the QueC family. As to quaternary structure, homodimer. Zn(2+) serves as cofactor.

The catalysed reaction is 7-carboxy-7-deazaguanine + NH4(+) + ATP = 7-cyano-7-deazaguanine + ADP + phosphate + H2O + H(+). It functions in the pathway purine metabolism; 7-cyano-7-deazaguanine biosynthesis. Its function is as follows. Catalyzes the ATP-dependent conversion of 7-carboxy-7-deazaguanine (CDG) to 7-cyano-7-deazaguanine (preQ(0)). In Geobacillus sp. (strain WCH70), this protein is 7-cyano-7-deazaguanine synthase.